A 98-amino-acid chain; its full sequence is UPF0473 protein LAR_0522 (98 aa).

Belongs to the UPF0473 family.

In Limosilactobacillus reuteri subsp. reuteri (strain JCM 1112) (Lactobacillus reuteri), this protein is UPF0473 protein LAR_0522.